A 641-amino-acid chain; its full sequence is Lipase (641 aa).

Positions 1-38 are cleaved as a signal peptide; the sequence is MKETKHQHTFSIRKSAYGAASVMVASCIFVIGGGVAEA. 2 disordered regions span residues 41–174 and 206–246; these read STTQ…PSVD and TVSP…KPTV. A compositionally biased stretch (low complexity) spans 53 to 64; that stretch reads QTSQQETHTHQT. The span at 73-94 shows a compositional bias: basic and acidic residues; sequence TPEHVDDSKEATPLPEKAESPK. Polar residues-rich tracts occupy residues 95–106 and 127–139; these read TEVTVQPSSHTQ and PEST…VESN. Residues 140-165 are compositionally biased toward basic and acidic residues; the sequence is KATENEMSPVEHHASNVEKREDRLET. The span at 227–239 shows a compositional bias: polar residues; it reads ENTTAQNKFTSQA. S369 (nucleophile) is an active-site residue. Residue G535 participates in Ca(2+) binding. The Charge relay system role is filled by D559. A Ca(2+)-binding site is contributed by D599. The active-site Charge relay system is the H600. Ca(2+)-binding residues include D602, D607, and D610.

The protein belongs to the AB hydrolase superfamily. Lipase family. Ca(2+) serves as cofactor.

The protein localises to the secreted. It carries out the reaction a triacylglycerol + H2O = a diacylglycerol + a fatty acid + H(+). It catalyses the reaction a 1,2-diacyl-sn-glycero-3-phosphocholine + H2O = a 2-acyl-sn-glycero-3-phosphocholine + a fatty acid + H(+). Has a broad substrate specificity hydrolyzing a variety of triglycerides and phosphatidylcholines. In Staphylococcus hyicus, this protein is Lipase (lip).